The primary structure comprises 228 residues: MVAPSAEIDLAPYIDHTLLDPLATPAAIAQLCEEADRYHFATVCLAPIYVRQAVELLYRRTPRVCTVIGFPTGAHTSAVKLYEAQEAADHGATELDVVVNLGWLKAGQTEAVHQEMAEIVAATGVTVKAILETTVLSETEKRLAAEICLDAGVSFLKTSTGWRGGATVADVKLLAQVARDRIGVKASGGIRTAAQALELIHAGATRLGTSRGVDLIRNRDTLEGETNY.

The active-site Proton donor/acceptor is the Asp96. The active-site Schiff-base intermediate with acetaldehyde is Lys157. Residue Lys185 is the Proton donor/acceptor of the active site.

This sequence belongs to the DeoC/FbaB aldolase family. DeoC type 1 subfamily.

It is found in the cytoplasm. The catalysed reaction is 2-deoxy-D-ribose 5-phosphate = D-glyceraldehyde 3-phosphate + acetaldehyde. Its pathway is carbohydrate degradation; 2-deoxy-D-ribose 1-phosphate degradation; D-glyceraldehyde 3-phosphate and acetaldehyde from 2-deoxy-alpha-D-ribose 1-phosphate: step 2/2. In terms of biological role, catalyzes a reversible aldol reaction between acetaldehyde and D-glyceraldehyde 3-phosphate to generate 2-deoxy-D-ribose 5-phosphate. The protein is Deoxyribose-phosphate aldolase of Cyanothece sp. (strain PCC 7425 / ATCC 29141).